Consider the following 250-residue polypeptide: NH(3)-dependent NAD(+) synthetase (250 aa).

30–37 is an ATP binding site; that stretch reads GVSGGIDS. Mg(2+) is bound at residue Asp36. Arg117 serves as a coordination point for deamido-NAD(+). Thr137 serves as a coordination point for ATP. Residue Glu142 participates in Mg(2+) binding. Deamido-NAD(+) is bound by residues Lys150 and Asp157. 2 residues coordinate ATP: Lys166 and Ser188. 234 to 235 serves as a coordination point for deamido-NAD(+); sequence HK.

Belongs to the NAD synthetase family. In terms of assembly, homodimer.

The catalysed reaction is deamido-NAD(+) + NH4(+) + ATP = AMP + diphosphate + NAD(+) + H(+). It participates in cofactor biosynthesis; NAD(+) biosynthesis; NAD(+) from deamido-NAD(+) (ammonia route): step 1/1. Its function is as follows. Catalyzes the ATP-dependent amidation of deamido-NAD to form NAD. Uses ammonia as a nitrogen source. This Mannheimia succiniciproducens (strain KCTC 0769BP / MBEL55E) protein is NH(3)-dependent NAD(+) synthetase.